Here is a 320-residue protein sequence, read N- to C-terminus: Malate dehydrogenase (320 aa).

Residues 10–15 and Asp34 each bind NAD(+); that span reads GAGNIG. The substrate site is built by Arg83 and Arg89. Residues Asn96 and 119-121 each bind NAD(+); that span reads ITN. The substrate site is built by Asn121 and Arg152. His176 functions as the Proton acceptor in the catalytic mechanism.

Belongs to the LDH/MDH superfamily. MDH type 3 family.

It carries out the reaction (S)-malate + NAD(+) = oxaloacetate + NADH + H(+). In terms of biological role, catalyzes the reversible oxidation of malate to oxaloacetate. This chain is Malate dehydrogenase, found in Rhizorhabdus wittichii (strain DSM 6014 / CCUG 31198 / JCM 15750 / NBRC 105917 / EY 4224 / RW1) (Sphingomonas wittichii).